A 327-amino-acid chain; its full sequence is Polyadenylate-binding protein-interacting protein 9 (327 aa).

A PAM2-like motif is present at residues 59–69 (KLNPLAKEFFP). The span at 97-113 (KQSGEEFDLDAKKDDNT) shows a compositional bias: basic and acidic residues. The disordered stretch occupies residues 97-132 (KQSGEEFDLDAKKDDNTRKRRNYSQGRRRLTGRISK). Positions 114–125 (RKRRNYSQGRRR) match the Bipartite nuclear localization signal motif. Over residues 114–127 (RKRRNYSQGRRRLT) the composition is skewed to basic residues. RRM domains are found at residues 141–216 (RTVY…PSKT) and 238–314 (RTIY…PSKT). The interval 308–327 (RVSPSKTPVRPRITRPPSTN) is disordered.

Its subcellular location is the nucleus. The protein is Polyadenylate-binding protein-interacting protein 9 (CID9) of Arabidopsis thaliana (Mouse-ear cress).